The following is a 409-amino-acid chain: tRNA(Met) cytidine acetate ligase (409 aa).

ATP is bound by residues 7 to 20 (VVEY…HLYH), G102, N169, and R194.

It belongs to the TmcAL family.

Its subcellular location is the cytoplasm. The catalysed reaction is cytidine(34) in elongator tRNA(Met) + acetate + ATP = N(4)-acetylcytidine(34) in elongator tRNA(Met) + AMP + diphosphate. In terms of biological role, catalyzes the formation of N(4)-acetylcytidine (ac(4)C) at the wobble position of elongator tRNA(Met), using acetate and ATP as substrates. First activates an acetate ion to form acetyladenylate (Ac-AMP) and then transfers the acetyl group to tRNA to form ac(4)C34. In Clostridium botulinum (strain Kyoto / Type A2), this protein is tRNA(Met) cytidine acetate ligase.